The primary structure comprises 365 residues: S-adenosylmethionine:tRNA ribosyltransferase-isomerase (365 aa).

It belongs to the QueA family. As to quaternary structure, monomer.

The protein resides in the cytoplasm. The enzyme catalyses 7-aminomethyl-7-carbaguanosine(34) in tRNA + S-adenosyl-L-methionine = epoxyqueuosine(34) in tRNA + adenine + L-methionine + 2 H(+). Its pathway is tRNA modification; tRNA-queuosine biosynthesis. Transfers and isomerizes the ribose moiety from AdoMet to the 7-aminomethyl group of 7-deazaguanine (preQ1-tRNA) to give epoxyqueuosine (oQ-tRNA). The polypeptide is S-adenosylmethionine:tRNA ribosyltransferase-isomerase (Prochlorococcus marinus (strain NATL2A)).